A 657-amino-acid polypeptide reads, in one-letter code: Glycogen debranching enzyme (657 aa).

Asp-336 serves as the catalytic Nucleophile. The Proton donor role is filled by Glu-371. The segment covering 458–467 has biased composition (basic and acidic residues); sequence NEANGEENRD. The interval 458-479 is disordered; that stretch reads NEANGEENRDGTNNNYSNNHGK.

This sequence belongs to the glycosyl hydrolase 13 family.

The enzyme catalyses Hydrolysis of (1-&gt;6)-alpha-D-glucosidic linkages to branches with degrees of polymerization of three or four glucose residues in limit dextrin.. Its pathway is glycan degradation; glycogen degradation. Its function is as follows. Removes maltotriose and maltotetraose chains that are attached by 1,6-alpha-linkage to the limit dextrin main chain, generating a debranched limit dextrin. The protein is Glycogen debranching enzyme of Escherichia coli O139:H28 (strain E24377A / ETEC).